A 437-amino-acid polypeptide reads, in one-letter code: GTPase Obg (437 aa).

In terms of domain architecture, Obg spans 2 to 160 (SMFLDTAKIS…RELQLELKIL (159 aa)). The tract at residues 127–146 (GNIRFATPRNPAPEIAENGE) is disordered. The region spanning 161-338 (ADVGLVGFPS…LLEATAELLD (178 aa)) is the OBG-type G domain. GTP is bound by residues 167-174 (GFPSVGKS), 192-196 (FTTIV), 214-217 (DLPG), 284-287 (NKMD), and 319-321 (SSL). Mg(2+)-binding residues include Ser-174 and Thr-194. The 79-residue stretch at 359 to 437 (GFNEEERPFE…IGNFEFEFVD (79 aa)) folds into the OCT domain.

This sequence belongs to the TRAFAC class OBG-HflX-like GTPase superfamily. OBG GTPase family. In terms of assembly, monomer. It depends on Mg(2+) as a cofactor.

It localises to the cytoplasm. An essential GTPase which binds GTP, GDP and possibly (p)ppGpp with moderate affinity, with high nucleotide exchange rates and a fairly low GTP hydrolysis rate. Plays a role in control of the cell cycle, stress response, ribosome biogenesis and in those bacteria that undergo differentiation, in morphogenesis control. The chain is GTPase Obg from Streptococcus thermophilus (strain ATCC BAA-491 / LMD-9).